A 25-amino-acid polypeptide reads, in one-letter code: Pregnancy-associated glycoprotein 59g (25 aa).

Asn-4 carries an N-linked (GlcNAc...) asparagine glycan.

The protein belongs to the peptidase A1 family. As to expression, highly expressed in the placenta between day 60 and day 100 of gestation.

It localises to the secreted. The protein resides in the extracellular space. The polypeptide is Pregnancy-associated glycoprotein 59g (Ovis aries (Sheep)).